Here is a 352-residue protein sequence, read N- to C-terminus: N-acetyl-gamma-glutamyl-phosphate reductase (352 aa).

The active site involves cysteine 156.

It belongs to the NAGSA dehydrogenase family. Type 1 subfamily.

Its subcellular location is the cytoplasm. It carries out the reaction N-acetyl-L-glutamate 5-semialdehyde + phosphate + NADP(+) = N-acetyl-L-glutamyl 5-phosphate + NADPH + H(+). Its pathway is amino-acid biosynthesis; L-arginine biosynthesis; N(2)-acetyl-L-ornithine from L-glutamate: step 3/4. Its function is as follows. Catalyzes the NADPH-dependent reduction of N-acetyl-5-glutamyl phosphate to yield N-acetyl-L-glutamate 5-semialdehyde. This chain is N-acetyl-gamma-glutamyl-phosphate reductase, found in Afipia carboxidovorans (strain ATCC 49405 / DSM 1227 / KCTC 32145 / OM5) (Oligotropha carboxidovorans).